The chain runs to 193 residues: ATP-dependent Clp protease proteolytic subunit 2 (193 aa).

The active-site Nucleophile is Ser-98. His-123 is an active-site residue.

It belongs to the peptidase S14 family. As to quaternary structure, fourteen ClpP subunits assemble into 2 heptameric rings which stack back to back to give a disk-like structure with a central cavity, resembling the structure of eukaryotic proteasomes.

It localises to the cytoplasm. The enzyme catalyses Hydrolysis of proteins to small peptides in the presence of ATP and magnesium. alpha-casein is the usual test substrate. In the absence of ATP, only oligopeptides shorter than five residues are hydrolyzed (such as succinyl-Leu-Tyr-|-NHMec, and Leu-Tyr-Leu-|-Tyr-Trp, in which cleavage of the -Tyr-|-Leu- and -Tyr-|-Trp bonds also occurs).. Cleaves peptides in various proteins in a process that requires ATP hydrolysis. Has a chymotrypsin-like activity. Plays a major role in the degradation of misfolded proteins. The polypeptide is ATP-dependent Clp protease proteolytic subunit 2 (Bacillus anthracis).